Consider the following 212-residue polypeptide: Proteasome subunit beta 2 (212 aa).

Residues 1 to 15 (MLHHPGTGQLRALKG) constitute a propeptide, removed in mature form; by autocatalysis. Catalysis depends on threonine 16, which acts as the Nucleophile.

Belongs to the peptidase T1B family. In terms of assembly, the 20S proteasome core is composed of 14 alpha and 14 beta subunits that assemble into four stacked heptameric rings, resulting in a barrel-shaped structure. The two inner rings, each composed of seven catalytic beta subunits, are sandwiched by two outer rings, each composed of seven alpha subunits. The catalytic chamber with the active sites is on the inside of the barrel. Has a gated structure, the ends of the cylinder being occluded by the N-termini of the alpha-subunits. Is capped at one or both ends by the proteasome regulatory ATPase, PAN.

The protein localises to the cytoplasm. It catalyses the reaction Cleavage of peptide bonds with very broad specificity.. The formation of the proteasomal ATPase PAN-20S proteasome complex, via the docking of the C-termini of PAN into the intersubunit pockets in the alpha-rings, triggers opening of the gate for substrate entry. Interconversion between the open-gate and close-gate conformations leads to a dynamic regulation of the 20S proteasome proteolysis activity. Component of the proteasome core, a large protease complex with broad specificity involved in protein degradation. This is Proteasome subunit beta 2 from Hyperthermus butylicus (strain DSM 5456 / JCM 9403 / PLM1-5).